Consider the following 570-residue polypeptide: Sulfite reductase [NADPH] hemoprotein beta-component (570 aa).

Residues C434, C440, C479, and C483 each contribute to the [4Fe-4S] cluster site. A siroheme-binding site is contributed by C483.

It belongs to the nitrite and sulfite reductase 4Fe-4S domain family. Alpha(8)-beta(8). The alpha component is a flavoprotein, the beta component is a hemoprotein. Siroheme is required as a cofactor. [4Fe-4S] cluster serves as cofactor.

The catalysed reaction is hydrogen sulfide + 3 NADP(+) + 3 H2O = sulfite + 3 NADPH + 4 H(+). It functions in the pathway sulfur metabolism; hydrogen sulfide biosynthesis; hydrogen sulfide from sulfite (NADPH route): step 1/1. Component of the sulfite reductase complex that catalyzes the 6-electron reduction of sulfite to sulfide. This is one of several activities required for the biosynthesis of L-cysteine from sulfate. The polypeptide is Sulfite reductase [NADPH] hemoprotein beta-component (Salmonella arizonae (strain ATCC BAA-731 / CDC346-86 / RSK2980)).